We begin with the raw amino-acid sequence, 367 residues long: Pantothenate kinase CAB1 (367 aa).

The protein belongs to the type II pantothenate kinase family.

It is found in the cytoplasm. It localises to the nucleus. It carries out the reaction (R)-pantothenate + ATP = (R)-4'-phosphopantothenate + ADP + H(+). The protein operates within cofactor biosynthesis; coenzyme A biosynthesis; CoA from (R)-pantothenate: step 1/5. Its activity is regulated as follows. Regulated by feedback inhibition by malonyl-CoA. Functionally, plays a role in the physiological regulation of the intracellular CoA concentration. The sequence is that of Pantothenate kinase CAB1 (CAB1) from Saccharomyces cerevisiae (strain ATCC 204508 / S288c) (Baker's yeast).